A 130-amino-acid polypeptide reads, in one-letter code: Glycine cleavage system H protein (130 aa).

The Lipoyl-binding domain maps to 22 to 103; it reads KAYIGISDCA…PYGSWIAAIE (82 aa). Lysine 63 carries the N6-lipoyllysine modification.

This sequence belongs to the GcvH family. As to quaternary structure, the glycine cleavage system is composed of four proteins: P, T, L and H. (R)-lipoate serves as cofactor.

In terms of biological role, the glycine cleavage system catalyzes the degradation of glycine. The H protein shuttles the methylamine group of glycine from the P protein to the T protein. In Clostridium botulinum (strain ATCC 19397 / Type A), this protein is Glycine cleavage system H protein.